A 63-amino-acid polypeptide reads, in one-letter code: Large ribosomal subunit protein uL29 (63 aa).

The protein belongs to the universal ribosomal protein uL29 family.

This chain is Large ribosomal subunit protein uL29, found in Hahella chejuensis (strain KCTC 2396).